A 322-amino-acid polypeptide reads, in one-letter code: Undecaprenyl-phosphate 4-deoxy-4-formamido-L-arabinose transferase (322 aa).

The Cytoplasmic segment spans residues 1–235 (MFEIHPVKKV…TCLTTTPLRM (235 aa)). The chain crosses the membrane as a helical span at residues 236–256 (LSLLGSIIAIGGFSIAVLLVI). Topologically, residues 257–269 (LRLTFGPQWAAEG) are periplasmic. A helical membrane pass occupies residues 270–290 (VFMLFAVLFTFIGAQFIGMGL). Topologically, residues 291–322 (LGEYIGRIYTDVRARPRYFVQQVIRPSSKENE) are cytoplasmic.

The protein belongs to the glycosyltransferase 2 family.

The protein localises to the cell inner membrane. The enzyme catalyses UDP-4-deoxy-4-formamido-beta-L-arabinose + di-trans,octa-cis-undecaprenyl phosphate = 4-deoxy-4-formamido-alpha-L-arabinopyranosyl di-trans,octa-cis-undecaprenyl phosphate + UDP. The protein operates within glycolipid biosynthesis; 4-amino-4-deoxy-alpha-L-arabinose undecaprenyl phosphate biosynthesis; 4-amino-4-deoxy-alpha-L-arabinose undecaprenyl phosphate from UDP-4-deoxy-4-formamido-beta-L-arabinose and undecaprenyl phosphate: step 1/2. Its pathway is bacterial outer membrane biogenesis; lipopolysaccharide biosynthesis. Its function is as follows. Catalyzes the transfer of 4-deoxy-4-formamido-L-arabinose from UDP to undecaprenyl phosphate. The modified arabinose is attached to lipid A and is required for resistance to polymyxin and cationic antimicrobial peptides. The polypeptide is Undecaprenyl-phosphate 4-deoxy-4-formamido-L-arabinose transferase (Escherichia coli O7:K1 (strain IAI39 / ExPEC)).